The primary structure comprises 97 residues: Putative membrane protein insertion efficiency factor (97 aa).

Residues 68-97 (VPGTELNTAPRSGQACNPTESTHSTTQTRH) form a disordered region. Polar residues predominate over residues 72 to 97 (ELNTAPRSGQACNPTESTHSTTQTRH).

This sequence belongs to the UPF0161 family.

It is found in the cell inner membrane. Functionally, could be involved in insertion of integral membrane proteins into the membrane. This Marinobacter nauticus (strain ATCC 700491 / DSM 11845 / VT8) (Marinobacter aquaeolei) protein is Putative membrane protein insertion efficiency factor.